Reading from the N-terminus, the 469-residue chain is Tubulin gamma-2 chain (469 aa).

A142–G148 is a GTP binding site.

Belongs to the tubulin family.

It localises to the cytoplasm. Its subcellular location is the cytoskeleton. The protein resides in the microtubule organizing center. Tubulin is the major constituent of microtubules. The gamma chain is found at microtubule organizing centers (MTOC) such as the spindle poles, suggesting that it is involved in the minus-end nucleation of microtubule assembly. The protein is Tubulin gamma-2 chain (TUBG2) of Oryza sativa subsp. japonica (Rice).